We begin with the raw amino-acid sequence, 1072 residues long: MSGRAVSNSQHAQQSFGSGPQLYRDVAELHAVPSPSHGALMDPSHFDDFAFAYQGLPDQPSLVSLADHAHAHASQSPTAFPQHQAMSGLAHNGLPFGALPAGNRSQSMDGSDAPPDRTSPASNALEDSTTDEFGLASRSRADATDLGGKPKEDKADATPAWSELKTKAGKERKRLPLACIACRRKKIRCSGEKPACKHCLRSRIPCVYKVTTRKAAPRTDYMAMLDKRLKRMEERIIKVIPKSDQEVASSVTRAVVKPAIPGTVPSNKPTKKRGAEEAFGPDLEAWAKAPSKPKIDGDDRPSSLQVQEAEENKLQHEGTEALPSKEIQEHLAEVFFDNIYGQSYHLLHKPSYMRKLKNGTLPPVLVLTVCAVAARFTSSPLVNSSGPEFLRGEEWASHARDICTRRYEWPNLTILTCLLILGLHEFGTCQGGRSWALGGQAIRMAFALQLHKDLEYDPSGRTGPKKQLSFIDREIRRRIMWACFLMDRFNSSGTDRPMFIREDTIQIPLPVKEKYFQFDMPAPTEMLDGQVPHPASPNDGQLADARENMGVAAFLIRAIALWGRIITYLSQGGKDLDPNPMWEDESQYVKHLNDVVNLEASLPSSLKYSAENLDVHKTENTASQFLFMHICLQHNILFVSRAAMSARKQQGVHDDFFSEASKRTFSAANQISELLREAEQSRCFVSAPFAGYCAFSSTTVHILGVISGNPNMKPTAEANLTTNVKYLHKMKKYWGMFHWMVENVRTQYRNALDAMRAGANLQDRAAQSSFLQYGDWFNRYPHGLSDAEFMDPATHKRKDSGADGVLEAKPELQSVEEYFSTLPTPQSVEHKDTIRAVGTKRKQSAKKQAGLPTQSGQHLESMQGTDADSVSGAQERRFSGGLGLPSNSYNPLAVSNAQNPAFSTAMSPMSPANMTAFSHHAHTPTFFPPELLAMNFGQGANGNIDPLDRQLVFGGYSLDASTGLGGGQDIMSGLDWDAVASGAHPDGGLQGRRSTAKAGMNGQAAGMADGAGLSGPEASSAWFMPFNMEPPEMGQDPGFNMGGIDPFTGVFGGGGSGLATPNALGGLQQQGP.

Positions 179–206 (CIACRRKKIRCSGEKPACKHCLRSRIPC) form a DNA-binding region, zn(2)-C6 fungal-type.

It is found in the nucleus. Functionally, zn(2)-C6 fungal-type transcription factor that has a role in conidia production and also in plant colonization. Acts as a negative regulator of the production of macroconidia and is required for full virulence and the positive regulation of SIX effectors. In addition, FTF2 is also involved in the regulation of class II hydrophobins FOXG_02746 and FOXG_02748 likely required for plant colonization. The protein is Zn(2)-C6 fungal-type transcription factor FTF2 of Fusarium oxysporum f. sp. lycopersici (strain 4287 / CBS 123668 / FGSC 9935 / NRRL 34936) (Fusarium vascular wilt of tomato).